A 142-amino-acid chain; its full sequence is Large ribosomal subunit protein uL11 (142 aa).

The protein belongs to the universal ribosomal protein uL11 family. As to quaternary structure, part of the ribosomal stalk of the 50S ribosomal subunit. Interacts with L10 and the large rRNA to form the base of the stalk. L10 forms an elongated spine to which L12 dimers bind in a sequential fashion forming a multimeric L10(L12)X complex. One or more lysine residues are methylated.

In terms of biological role, forms part of the ribosomal stalk which helps the ribosome interact with GTP-bound translation factors. This chain is Large ribosomal subunit protein uL11, found in Haemophilus influenzae (strain 86-028NP).